Reading from the N-terminus, the 368-residue chain is Interferon-stimulated 20 kDa exonuclease-like 2 (368 aa).

Disordered stretches follow at residues 33–107 (FLEQ…APSK) and 127–187 (PKTK…PTVP). Polar residues predominate over residues 42–54 (KKNQPPNKVSKLN). A compositionally biased stretch (basic and acidic residues) spans 77 to 96 (KKKEAAASKRDSERSKDKKA). Residues 131-145 (STQKKGSKKKSLKKK) show a composition bias toward basic residues. In terms of domain architecture, Exonuclease spans 194 to 368 (MVAIDCEMVG…QHLAQNPPEN (175 aa)).

The protein localises to the nucleus. Its subcellular location is the nucleolus. 3'-&gt; 5'-exoribonuclease involved in ribosome biogenesis in the processing of the 12S pre-rRNA. Displays a strong specificity for a 3'-end containing a free hydroxyl group. This is Interferon-stimulated 20 kDa exonuclease-like 2 (Isg20l2) from Mus musculus (Mouse).